A 306-amino-acid polypeptide reads, in one-letter code: Glutaminase (306 aa).

The substrate site is built by Ser64, Asn115, Glu159, Asn166, Tyr190, Tyr242, and Val260.

Belongs to the glutaminase family. Homotetramer.

The enzyme catalyses L-glutamine + H2O = L-glutamate + NH4(+). The sequence is that of Glutaminase from Vibrio parahaemolyticus serotype O3:K6 (strain RIMD 2210633).